The chain runs to 230 residues: Orotidine 5'-phosphate decarboxylase (230 aa).

Substrate is bound by residues D10, K32, 59-68 (DLKYHDIPNT), T119, R180, Q189, G209, and R210. Catalysis depends on K61, which acts as the Proton donor.

This sequence belongs to the OMP decarboxylase family. Type 1 subfamily. In terms of assembly, homodimer.

It carries out the reaction orotidine 5'-phosphate + H(+) = UMP + CO2. Its pathway is pyrimidine metabolism; UMP biosynthesis via de novo pathway; UMP from orotate: step 2/2. Functionally, catalyzes the decarboxylation of orotidine 5'-monophosphate (OMP) to uridine 5'-monophosphate (UMP). The polypeptide is Orotidine 5'-phosphate decarboxylase (Haemophilus influenzae (strain PittEE)).